A 747-amino-acid polypeptide reads, in one-letter code: Protein Niban 2 (747 aa).

Gly-2 carries N-myristoyl glycine lipidation. Residues 68 to 192 (RIIFSGNLFQ…WQAVLQDCVR (125 aa)) enclose the PH domain. Phosphoserine is present on residues Ser-568 and Ser-574. A disordered region spans residues 589–747 (WGEQYGDGGD…EDSAGVQTEF (159 aa)). Gly residues predominate over residues 593–602 (YGDGGDGSDS). A phosphoserine mark is found at Ser-605, Ser-626, Ser-641, Ser-645, Ser-648, Ser-667, Ser-672, Ser-683, Ser-693, and Ser-697. Basic and acidic residues predominate over residues 708-722 (VDLEPPKPSDQETGE). A compositionally biased stretch (polar residues) spans 734–747 (HTTTEDSAGVQTEF).

Belongs to the Niban family. As apoptosis proceeds, degraded via an proteasome-independent pathway, probably by caspases.

The protein resides in the cytoplasm. It localises to the cytosol. Its subcellular location is the cell junction. The protein localises to the adherens junction. It is found in the membrane. Functionally, may play a role in apoptosis suppression. In Rattus norvegicus (Rat), this protein is Protein Niban 2.